The following is a 368-amino-acid chain: Histidinol dehydrogenase (368 aa).

Substrate contacts are provided by Thr-197, Gln-218, and His-221. Zn(2+)-binding residues include Gln-218 and His-221. Active-site proton acceptor residues include Glu-276 and His-277. Substrate is bound by residues His-277, Asp-306, Glu-358, and His-363. Asp-306 contributes to the Zn(2+) binding site. Residue His-363 coordinates Zn(2+).

This sequence belongs to the histidinol dehydrogenase family. Zn(2+) serves as cofactor.

It catalyses the reaction L-histidinol + 2 NAD(+) + H2O = L-histidine + 2 NADH + 3 H(+). The protein operates within amino-acid biosynthesis; L-histidine biosynthesis; L-histidine from 5-phospho-alpha-D-ribose 1-diphosphate: step 9/9. Functionally, catalyzes the sequential NAD-dependent oxidations of L-histidinol to L-histidinaldehyde and then to L-histidine. This chain is Histidinol dehydrogenase, found in Pyrobaculum aerophilum (strain ATCC 51768 / DSM 7523 / JCM 9630 / CIP 104966 / NBRC 100827 / IM2).